A 353-amino-acid polypeptide reads, in one-letter code: Probable arabinan endo-1,5-alpha-L-arabinosidase B (353 aa).

The signal sequence occupies residues 1–16 (MVLVATLFSLFTVSLC). The active-site Proton acceptor is aspartate 39. Asparagine 194 carries an N-linked (GlcNAc...) asparagine glycan. The disordered stretch occupies residues 202 to 227 (HLAKHPKTERVNSQDQNPDPLCRDSS). Catalysis depends on glutamate 233, which acts as the Proton donor.

Belongs to the glycosyl hydrolase 43 family.

The protein resides in the secreted. It carries out the reaction Endohydrolysis of (1-&gt;5)-alpha-arabinofuranosidic linkages in (1-&gt;5)-arabinans.. It functions in the pathway glycan metabolism; L-arabinan degradation. Its function is as follows. Endo-1,5-alpha-L-arabinanase involved in degradation of pectin. Its preferred substrate is linear 1,5-alpha-L-arabinan. The chain is Probable arabinan endo-1,5-alpha-L-arabinosidase B (abnB) from Aspergillus oryzae (strain ATCC 42149 / RIB 40) (Yellow koji mold).